The chain runs to 352 residues: MSQDRRDVVRGLPLYKQGASHGENAVKLSSNENPFEPLPSVVEAVTRTLPRFNRYPLMSAEEVRSTIAGHFGVDVSQVAVGAGSTEVASQLMHALAGAGDEIIFPWRSFEAYPILTKVAGATPIPVPLTVDLRHDLDAMADAITDRTRVIFLCTPNNPTGTVLHTDEVVEFLARVPENVVVVMDEAYCHFNRDDAAVDGLTLLEDHPNVVVLRTFSKAYGLAGLRIGFAISTPEISDDLRRVATPFTVTTLAQQAAIASLAAEDELNERVNRIVAERTRVFDELTRQGWKIVPSQANFLWLATGDDTDRIDEVMVSHGVFARCWSEEGIRLSIGLDAENDRAIEALSQAVKG.

The residue at position 217 (Lys-217) is an N6-(pyridoxal phosphate)lysine.

This sequence belongs to the class-II pyridoxal-phosphate-dependent aminotransferase family. As to quaternary structure, homodimer. Requires pyridoxal 5'-phosphate as cofactor.

The catalysed reaction is an aromatic L-alpha-amino acid + 2-oxoglutarate = an aromatic oxo-acid + L-glutamate. Aminotransferase that catalyzes the conversion of aromatic amino acids and 2-oxoglutarate into corresponding aromatic oxo acids and L-glutamate. In Cutibacterium acnes (strain DSM 16379 / KPA171202) (Propionibacterium acnes), this protein is Aromatic amino acid aminotransferase.